Consider the following 364-residue polypeptide: Spermidine/putrescine import ATP-binding protein PotA (364 aa).

An ABC transporter domain is found at 6-236; sequence IEIRQIYKSY…PANLHVAMFI (231 aa). 38-45 lines the ATP pocket; the sequence is GPSGCGKT.

It belongs to the ABC transporter superfamily. Spermidine/putrescine importer (TC 3.A.1.11.1) family. In terms of assembly, the complex is composed of two ATP-binding proteins (PotA), two transmembrane proteins (PotB and PotC) and a solute-binding protein (PotD).

The protein localises to the cell inner membrane. The enzyme catalyses ATP + H2O + polyamine-[polyamine-binding protein]Side 1 = ADP + phosphate + polyamineSide 2 + [polyamine-binding protein]Side 1.. Part of the ABC transporter complex PotABCD involved in spermidine/putrescine import. Responsible for energy coupling to the transport system. In Legionella pneumophila (strain Paris), this protein is Spermidine/putrescine import ATP-binding protein PotA.